Reading from the N-terminus, the 609-residue chain is Carotenoid cleavage dioxygenase 7, chloroplastic (609 aa).

A chloroplast-targeting transit peptide spans M1–R34. Positions 263, 316, 394, and 603 each coordinate Fe cation.

Belongs to the carotenoid oxygenase family. It depends on Fe(2+) as a cofactor. In terms of tissue distribution, expressed in vascular bundles of roots, leaves, stems and panicles.

Its subcellular location is the plastid. It is found in the chloroplast. It carries out the reaction 9-cis-beta-carotene + O2 = 9-cis-10'-apo-beta-carotenal + beta-ionone. Involved in strigolactones biosynthesis by cleaving asymmetrically a variety of linear and cyclic carotenoids at the 9-10 double bond. Produces one C(13) beta-ionone and the C(27) 10'-apo-beta-carotenal. Strigolactones are hormones that inhibit tillering and shoot branching through the MAX-dependent pathway, contribute to the regulation of shoot architectural response to phosphate-limiting conditions and function as rhizosphere signal that stimulates hyphal branching of arbuscular mycorrhizal fungi and trigger seed germination of root parasitic weeds. Can rescue the phenotype in the Arabidopsis max3 mutant. This is Carotenoid cleavage dioxygenase 7, chloroplastic (CCD7) from Oryza sativa subsp. japonica (Rice).